Consider the following 275-residue polypeptide: Hydroxyethylthiazole kinase (275 aa).

A substrate-binding site is contributed by Met-50. Positions 126 and 171 each coordinate ATP. Residue Ala-200 participates in substrate binding.

The protein belongs to the Thz kinase family. The cofactor is Mg(2+).

The catalysed reaction is 5-(2-hydroxyethyl)-4-methylthiazole + ATP = 4-methyl-5-(2-phosphooxyethyl)-thiazole + ADP + H(+). It participates in cofactor biosynthesis; thiamine diphosphate biosynthesis; 4-methyl-5-(2-phosphoethyl)-thiazole from 5-(2-hydroxyethyl)-4-methylthiazole: step 1/1. Its function is as follows. Catalyzes the phosphorylation of the hydroxyl group of 4-methyl-5-beta-hydroxyethylthiazole (THZ). This is Hydroxyethylthiazole kinase from Acinetobacter baumannii (strain ATCC 17978 / DSM 105126 / CIP 53.77 / LMG 1025 / NCDC KC755 / 5377).